The following is a 275-amino-acid chain: Dermonecrotic toxin SpeSicTox-betaIIA3i (275 aa).

Residue histidine 5 is part of the active site. Positions 25 and 27 each coordinate Mg(2+). The active-site Nucleophile is the histidine 41. 2 disulfides stabilise this stretch: cysteine 45–cysteine 51 and cysteine 47–cysteine 190. Position 85 (aspartate 85) interacts with Mg(2+).

It belongs to the arthropod phospholipase D family. Class II subfamily. The cofactor is Mg(2+). As to expression, expressed by the venom gland.

The protein resides in the secreted. It catalyses the reaction an N-(acyl)-sphingosylphosphocholine = an N-(acyl)-sphingosyl-1,3-cyclic phosphate + choline. The catalysed reaction is an N-(acyl)-sphingosylphosphoethanolamine = an N-(acyl)-sphingosyl-1,3-cyclic phosphate + ethanolamine. The enzyme catalyses a 1-acyl-sn-glycero-3-phosphocholine = a 1-acyl-sn-glycero-2,3-cyclic phosphate + choline. It carries out the reaction a 1-acyl-sn-glycero-3-phosphoethanolamine = a 1-acyl-sn-glycero-2,3-cyclic phosphate + ethanolamine. In terms of biological role, dermonecrotic toxins cleave the phosphodiester linkage between the phosphate and headgroup of certain phospholipids (sphingolipid and lysolipid substrates), forming an alcohol (often choline) and a cyclic phosphate. This toxin acts on sphingomyelin (SM). It may also act on ceramide phosphoethanolamine (CPE), lysophosphatidylcholine (LPC) and lysophosphatidylethanolamine (LPE), but not on lysophosphatidylserine (LPS), and lysophosphatidylglycerol (LPG). It acts by transphosphatidylation, releasing exclusively cyclic phosphate products as second products. Induces dermonecrosis, hemolysis, increased vascular permeability, edema, inflammatory response, and platelet aggregation. The polypeptide is Dermonecrotic toxin SpeSicTox-betaIIA3i (Sicarius peruensis (Six-eyed sand spider)).